Reading from the N-terminus, the 93-residue chain is Small ribosomal subunit protein uS19 (93 aa).

Disordered stretches follow at residues 1–25 (MPRS…QNTK) and 74–93 (FAPT…ARRR). Basic and acidic residues-rich tracts occupy residues 14-23 (HLQKKVDDQN) and 81-93 (RGHD…ARRR).

It belongs to the universal ribosomal protein uS19 family.

In terms of biological role, protein S19 forms a complex with S13 that binds strongly to the 16S ribosomal RNA. The chain is Small ribosomal subunit protein uS19 from Beutenbergia cavernae (strain ATCC BAA-8 / DSM 12333 / CCUG 43141 / JCM 11478 / NBRC 16432 / NCIMB 13614 / HKI 0122).